A 336-amino-acid chain; its full sequence is Peroxidase 72 (336 aa).

A signal peptide spans 1–23 (MAKSLNILIAALSLIAFSPFCLC). 4 disulfide bridges follow: Cys-42–Cys-122, Cys-75–Cys-80, Cys-128–Cys-329, and Cys-207–Cys-239. The Proton acceptor role is filled by His-73. The Ca(2+) site is built by Asp-74, Val-77, Gly-79, Asp-81, and Ser-83. Pro-170 lines the substrate pocket. N-linked (GlcNAc...) asparagine glycosylation is present at Asn-173. His-200 is a heme b binding site. Thr-201 is a binding site for Ca(2+). Asn-216 carries an N-linked (GlcNAc...) asparagine glycan. Ca(2+)-binding residues include Asp-252, Thr-255, and Asp-260.

This sequence belongs to the peroxidase family. Classical plant (class III) peroxidase subfamily. Heme b serves as cofactor. The cofactor is Ca(2+). In terms of tissue distribution, slightly expressed in roots.

It is found in the secreted. The enzyme catalyses 2 a phenolic donor + H2O2 = 2 a phenolic radical donor + 2 H2O. In terms of biological role, removal of H(2)O(2), oxidation of toxic reductants, biosynthesis and degradation of lignin, suberization, auxin catabolism, response to environmental stresses such as wounding, pathogen attack and oxidative stress. These functions might be dependent on each isozyme/isoform in each plant tissue. This is Peroxidase 72 (PER72) from Arabidopsis thaliana (Mouse-ear cress).